The sequence spans 260 residues: Ribonuclease HII (260 aa).

Residues 71–259 (ELVAGVDEVG…VHDAIVNKKN (189 aa)) form the RNase H type-2 domain. Positions 77, 78, and 169 each coordinate a divalent metal cation.

This sequence belongs to the RNase HII family. Mn(2+) is required as a cofactor. Requires Mg(2+) as cofactor.

The protein localises to the cytoplasm. It carries out the reaction Endonucleolytic cleavage to 5'-phosphomonoester.. Its function is as follows. Endonuclease that specifically degrades the RNA of RNA-DNA hybrids. This is Ribonuclease HII from Leuconostoc citreum (strain KM20).